We begin with the raw amino-acid sequence, 123 residues long: Holo-[acyl-carrier-protein] synthase (123 aa).

Mg(2+) is bound by residues Asp-7 and Glu-56.

The protein belongs to the P-Pant transferase superfamily. AcpS family. Requires Mg(2+) as cofactor.

Its subcellular location is the cytoplasm. It carries out the reaction apo-[ACP] + CoA = holo-[ACP] + adenosine 3',5'-bisphosphate + H(+). In terms of biological role, transfers the 4'-phosphopantetheine moiety from coenzyme A to a Ser of acyl-carrier-protein. This Carboxydothermus hydrogenoformans (strain ATCC BAA-161 / DSM 6008 / Z-2901) protein is Holo-[acyl-carrier-protein] synthase.